A 243-amino-acid polypeptide reads, in one-letter code: Derlin-1.2 (243 aa).

The Cytoplasmic segment spans residues 1-20 (MSSPAEYYKSLPPISKAYGT). The chain crosses the membrane as a helical span at residues 21–41 (LCFFTTVLVRLHILNPLFLYL). Residues 42-54 (YYPRVFKKFEVWR) are Lumenal-facing. Residues 55–75 (IFTSFFFLGPFSINFGIRLLM) traverse the membrane as a helical segment. The Cytoplasmic portion of the chain corresponds to 76 to 94 (IARYGVMLEKGAFDKRTAD). The chain crosses the membrane as a helical span at residues 95–115 (FLWMMIFGAISLLVLSVIPQL). Residues 116–155 (NTYVLGLPMVSMLVYVWSRENPNAQINIYGILQLKAFYLP) lie on the Lumenal side of the membrane. The chain crosses the membrane as a helical span at residues 156-176 (WVMLLLDVIFGSPLMPGLLGI). At 177–243 (MVGHLYYYFA…FRGRSYRLNQ (67 aa)) the chain is on the cytoplasmic side.

The protein belongs to the derlin family. Expressed in roots and endosperm.

It localises to the endoplasmic reticulum membrane. In terms of biological role, may be involved in the degradation process of specific misfolded endoplasmic reticulum (ER) luminal proteins. This chain is Derlin-1.2 (DER1.2), found in Zea mays (Maize).